Reading from the N-terminus, the 635-residue chain is Peptidyl-prolyl cis-trans isomerase PASTICCINO1 (635 aa).

Residues 1-10 are compositionally biased toward polar residues; the sequence is MAVGDQTEQN. Residues 1 to 28 form a disordered region; that stretch reads MAVGDQTEQNYLPKKKKSETEDDKRRKK. 3 PPIase FKBP-type domains span residues 51 to 147, 175 to 260, and 291 to 383; these read GDQV…LDFS, PYEV…VHFI, and DSRL…LGFE. 3 TPR repeats span residues 400–433, 449–482, and 483–516; these read ADKI…FNHV, NMLH…KPGH, and VKGL…DKSS. The interval 530–546 is calmodulin-binding; the sequence is KEQEAESKARKQFKGLF. Acidic residues predominate over residues 569–586; it reads EVDETKDNDDDETLEEEG. Residues 569–593 are disordered; that stretch reads EVDETKDNDDDETLEEEGATTVSTE. The chain crosses the membrane as a helical; Anchor for type IV membrane protein span at residues 609–629; it reads VMLQIGIQLGVVLIGILIFQF.

Belongs to the FKBP-type PPIase family. Interacts with calmodulin (CaM). Interacts with RPM1 and NAC089. Interacts with the elongase complex core members KCR1, PAS2 and CER10. In terms of tissue distribution, expressed ubiquitously.

The protein localises to the endoplasmic reticulum membrane. It is found in the cytoplasm. It localises to the nucleus. It carries out the reaction [protein]-peptidylproline (omega=180) = [protein]-peptidylproline (omega=0). Functionally, PPIases accelerate the folding of proteins. It catalyzes the cis-trans isomerization of proline imidic peptide bonds in oligopeptides. Essential protein regulating cell division, adhesion and elongation throughout the plant development and embryogenesis. Required for the spatial organization of apical meristems. Involved in the hormonal control of cell division and differentiation mediated by cytokinins and auxin. Regulates the function of NAC089 transcription factor by controlling its targeting to the nucleus upon plant cell division. Interacts with enzymes of the fatty acid elongase complex and favors the generation of very-long-chain fatty acids (VLCFAs) required for polar auxin transport and tissue patterning during plant development. The protein is Peptidyl-prolyl cis-trans isomerase PASTICCINO1 (PAS1) of Arabidopsis thaliana (Mouse-ear cress).